Consider the following 334-residue polypeptide: Formamidase (334 aa).

A CN hydrolase domain is found at 14–260 (FLVAAIQFPV…WEIVTGEIYP (247 aa)). Glu60 acts as the Proton acceptor in catalysis. Catalysis depends on Lys133, which acts as the Proton donor. The Nucleophile role is filled by Cys166.

Belongs to the carbon-nitrogen hydrolase superfamily. Aliphatic amidase family.

It catalyses the reaction formamide + H2O = formate + NH4(+). In terms of biological role, is an aliphatic amidase with a restricted substrate specificity, as it only hydrolyzes formamide. The sequence is that of Formamidase from Helicobacter pylori (strain G27).